The following is a 385-amino-acid chain: FK506-binding protein 5 (385 aa).

A PPIase FKBP-type domain is found at 26–115; that stretch reads TNFVSVHYDA…RFEVELIGFW (90 aa). 3 TPR repeats span residues 128–161, 177–210, and 211–244; these read AEKK…IQDL, VSIQ…DMTK, and IKAY…AIGL.

The enzyme catalyses [protein]-peptidylproline (omega=180) = [protein]-peptidylproline (omega=0). Inhibited by both FK506 and rapamycin. In terms of biological role, PPIases accelerate the folding of proteins. It catalyzes the cis-trans isomerization of proline imidic peptide bonds in oligopeptides. The polypeptide is FK506-binding protein 5 (FKBP5) (Rhizopus delemar (strain RA 99-880 / ATCC MYA-4621 / FGSC 9543 / NRRL 43880) (Mucormycosis agent)).